Consider the following 127-residue polypeptide: Large-conductance mechanosensitive channel (127 aa).

Transmembrane regions (helical) follow at residues 9 to 29 (EFAM…GVAF), 32 to 52 (IVTA…LGGV), and 75 to 95 (VIDF…INLL).

The protein belongs to the MscL family. In terms of assembly, homopentamer.

The protein resides in the cell inner membrane. Functionally, channel that opens in response to stretch forces in the membrane lipid bilayer. May participate in the regulation of osmotic pressure changes within the cell. This is Large-conductance mechanosensitive channel from Legionella pneumophila (strain Lens).